The sequence spans 540 residues: Pentatricopeptide repeat-containing protein At1g14470 (540 aa).

PPR repeat units lie at residues 70 to 104, 105 to 134, 135 to 165, 166 to 196, 197 to 227, 228 to 262, 263 to 297, 298 to 328, 330 to 364, 365 to 395, 397 to 431, 432 to 462, 463 to 497, and 498 to 528; these read NVFVVNSMFKYFSKMDMANDVLRLYEQRSRCGIMP, DAFSFPVVIKSAGRFGILFQALVEKLGFFK, DPYVRNVIMDMYVKHESVESARKVFDQISQR, KGSDWNVMISGYWKWGNKEEACKLFDMMPEN, DVVSWTVMITGFAKVKDLENARKYFDRMPEK, SVVSWNAMLSGYAQNGFTEDALRLFNDMLRLGVRP, NETTWVIVISACSFRADPSLTRSLVKLIDEKRVRL, NCFVKTALLDMHAKCRDIQSARRIFNELGTQ, NLVTWNAMISGYTRIGDMSSARQLFDTMPKRNVVS, WNSLIAGYAHNGQAALAIEFFEDMIDYGDSK, DEVTMISVLSACGHMADLELGDCIVDYIRKNQIKL, NDSGYRSLIFMYARGGNLWEAKRVFDEMKER, DVVSYNTLFTAFAANGDGVETLNLLSKMKDEGIEP, and DRVTYTSVLTACNRAGLLKEGQRIFKSIRNP.

This sequence belongs to the PPR family. PCMP-A subfamily.

In Arabidopsis thaliana (Mouse-ear cress), this protein is Pentatricopeptide repeat-containing protein At1g14470 (PCMP-A4).